The sequence spans 362 residues: E3 ubiquitin-protein ligase TM129 (362 aa).

The Lumenal portion of the chain corresponds to 1-6 (MDSPEV). The helical transmembrane segment at 7-27 (TFTLAYLVFAVCFVFTPNEFY) threads the bilayer. At 28-56 (SAGLTVQNLLSGWLGSEDAAFVPYHLRRT) the chain is on the cytoplasmic side. A helical transmembrane segment spans residues 57–77 (SATLLCHSLLPLGYYMGMCFA). At 78–94 (ASEKQLYSPGQAPEAWQ) the chain is on the lumenal side. Residues 95 to 115 (LFLLLAVTLPLLSCTLIYYWS) traverse the membrane as a helical segment. Over 116 to 362 (WDRWTRHPLA…FCILDVCCVR (247 aa)) the chain is Cytoplasmic. An RING-type; degenerate zinc finger spans residues 285–350 (CIGCMQTRAS…ASRVPCPTCR (66 aa)).

This sequence belongs to the TMEM129 family. As to quaternary structure, integral component of ER-resident dislocation complexes.

The protein resides in the endoplasmic reticulum membrane. The enzyme catalyses S-ubiquitinyl-[E2 ubiquitin-conjugating enzyme]-L-cysteine + [acceptor protein]-L-lysine = [E2 ubiquitin-conjugating enzyme]-L-cysteine + N(6)-ubiquitinyl-[acceptor protein]-L-lysine.. It participates in protein modification; protein ubiquitination. E3 ubiquitin-protein ligase involved in ER-associated protein degradation, preferentially associates with the E2 enzyme UBE2J2. Exploited by viral US11 proteins to mediate HLA class I proteins degradation. The polypeptide is E3 ubiquitin-protein ligase TM129 (Tmem129) (Mus musculus (Mouse)).